Here is a 720-residue protein sequence, read N- to C-terminus: Protein-glutamine gamma-glutamyltransferase 5 (720 aa).

An N-acetylalanine modification is found at Ala2. Active-site residues include Cys278, His337, and Asp360. Ca(2+) is bound by residues Asn400, Asp402, Glu448, and Glu453. Residues His470–Leu499 form a disordered region. Residues Ser481–Thr496 are compositionally biased toward polar residues.

It belongs to the transglutaminase superfamily. Transglutaminase family. The cofactor is Ca(2+). Expressed in foreskin keratinocytes.

It is found in the cytoplasm. It catalyses the reaction L-glutaminyl-[protein] + L-lysyl-[protein] = [protein]-L-lysyl-N(6)-5-L-glutamyl-[protein] + NH4(+). In terms of biological role, catalyzes the cross-linking of proteins and the conjugation of polyamines to proteins. Contributes to the formation of the cornified cell envelope of keratinocytes. In Homo sapiens (Human), this protein is Protein-glutamine gamma-glutamyltransferase 5 (TGM5).